The sequence spans 66 residues: Photosystem II reaction center protein H (66 aa).

The chain crosses the membrane as a helical span at residues 27–47 (GAVPIMTVIGLLLLVFLVILL).

The protein belongs to the PsbH family. In terms of assembly, PSII is composed of 1 copy each of membrane proteins PsbA, PsbB, PsbC, PsbD, PsbE, PsbF, PsbH, PsbI, PsbJ, PsbK, PsbL, PsbM, PsbT, PsbX, PsbY, Psb30/Ycf12, peripheral proteins PsbO, CyanoQ (PsbQ), PsbU, PsbV and a large number of cofactors. It forms dimeric complexes.

It is found in the cellular thylakoid membrane. Its function is as follows. One of the components of the core complex of photosystem II (PSII), required for its stability and/or assembly. PSII is a light-driven water:plastoquinone oxidoreductase that uses light energy to abstract electrons from H(2)O, generating O(2) and a proton gradient subsequently used for ATP formation. It consists of a core antenna complex that captures photons, and an electron transfer chain that converts photonic excitation into a charge separation. The polypeptide is Photosystem II reaction center protein H (Prochlorococcus marinus (strain MIT 9515)).